The chain runs to 56 residues: Large ribosomal subunit protein bL32 (56 aa).

Residues 1-39 (MAVQQNKKSRSKRGMRRSHDSLSTAQLSVDATSGELHRR) form a disordered region. Positions 7–16 (KKSRSKRGMR) are enriched in basic residues. A compositionally biased stretch (polar residues) spans 21–31 (SLSTAQLSVDA).

This sequence belongs to the bacterial ribosomal protein bL32 family.

This chain is Large ribosomal subunit protein bL32, found in Shewanella piezotolerans (strain WP3 / JCM 13877).